The sequence spans 156 residues: Cellulose synthase operon protein D (156 aa).

Its pathway is glycan metabolism; bacterial cellulose biosynthesis. Functionally, may have a major role in the perfection of crystallization, involved either in the pore structure itself or in the organization of the pores within the linear array of terminal synthesizing complexes (TCs). This is Cellulose synthase operon protein D from Komagataeibacter sucrofermentans (strain ATCC 700178 / DSM 15973 / CECT 7291 / JCM 9730 / LMG 18788 / BPR 2001) (Acetobacter xylinus subsp. sucrofermentans).